The chain runs to 549 residues: Protein X92 (549 aa).

In Trypanosoma brucei brucei, this protein is Protein X92.